The chain runs to 3184 residues: Probable serine/threonine-protein kinase pats1 (3184 aa).

Over residues 369 to 378 the composition is skewed to pro residues; it reads DPPPPPPSNS. Disordered stretches follow at residues 369 to 516 and 913 to 1013; these read DPPP…QIPP and SITR…TSIL. Residues 379-415 are compositionally biased toward low complexity; the sequence is SPPISKSTSNNNLNVSNYHNNNNNNNNSNSNLSNSGN. The span at 421–450 shows a compositional bias: polar residues; sequence DFQSQNLVKSYNRENSGNSLNSMLHQTSLP. A compositionally biased stretch (low complexity) spans 451–512; the sequence is NNNNSNVVNN…NNNNSNNNNS (62 aa). Positions 842-1348 constitute a Myotubularin phosphatase domain; it reads CFPDHSLLQE…FQDTMWNEYF (507 aa). A compositionally biased stretch (polar residues) spans 913-934; sequence SITRATSPEDQNNGSSNYLLTP. Residues 935–993 show a composition bias toward low complexity; sequence NSPNSSSSNLANNNNSNNNNINNNNNNNNNNNNNNNNNSNNNNNNNNNNNNNNNNNNNN. Residues 1000 to 1013 are compositionally biased toward polar residues; the sequence is SRSTTIDNGQTSIL. 13 LRR repeats span residues 1391 to 1412, 1416 to 1438, 1439 to 1460, 1467 to 1488, 1491 to 1512, 1514 to 1535, 1541 to 1563, 1564 to 1585, 1587 to 1608, 1610 to 1631, 1633 to 1654, 1656 to 1678, and 1680 to 1701; these read FLETLDLSNLRLYYLPSESTLY, GLRELNLSKNNLNSISCSLSSLV, KLEKLSFEENSITNLPIETVVL, SLTELNLSSNQLIDLPIEFSMF, SLKKLHLKNNRFSAIPEVLGML, NLIELDLSELDLSSSTNSGVGI, KLCILNLNQTRIVELPKEFGDLK, SLEKLYLDFNSLVTLPHSFRQL, NLEELSLSFNSMTELPREVCFL, NLKKLMIEGNQIQFLPNEISQL, KLMILNVCKNKLDSLPASIGQL, QLVSLNLNNNSQLVSLRPTMGLL, and NLVELKLDGTRLKTPPPEIVSL. The Roc domain occupies 1716-1910; the sequence is GQEQCYKMKL…EKLEALVQSQ (195 aa). Residues 1716-1910 form a small GTPase-like region; that stretch reads GQEQCYKMKL…EKLEALVQSQ (195 aa). GTP is bound by residues 1729–1736, 1797–1801, and 1854–1857; these read GQENVGKT, DFAGQ, and THLD. The COR domain occupies 1918-2127; the sequence is PRSYMLLENL…KCYWKNGMIL (210 aa). The 273-residue stretch at 2247-2519 folds into the Protein kinase domain; sequence LMIEELIGEG…RLIKIAEAMF (273 aa). ATP contacts are provided by residues 2253-2261 and Lys2274; that span reads IGEGGAALV. The Proton acceptor role is filled by Asp2379. Disordered stretches follow at residues 2528 to 2609 and 2652 to 2671; these read YQQQ…TISH and NSINNSNSNNEQPLSPNSLL. Positions 2529 to 2555 are enriched in low complexity; it reads QQQQQQQQQQQQSSPSKSSSTSPIIKS. Positions 2556–2576 are enriched in polar residues; that stretch reads LNLSTVSELGESSNQTPKQNI. 5 WD repeats span residues 2745–2785, 2790–2829, 2909–2947, 2949–2986, and 2990–3040; these read PNQG…KYIQ, ANKDKKRIHCLYPYMNTVWCGSADDSITIWDIDTYQKIKS, AHERAIHAMIQVDDHVWTASSDGTIKVWSSTCQSVHTIE, AHSSRIFTLELVGDFVWSGSWDTTIKIWSTKDYHLVSE, and KHKD…NSRS. The span at 3055 to 3126 shows a compositional bias: low complexity; that stretch reads GSSNSITNSN…NYYYSNNVNS (72 aa). Positions 3055–3164 are disordered; it reads GSSNSITNSN…TPPGSKGLMQ (110 aa). Polar residues predominate over residues 3141–3157; the sequence is HEQTSPNSATPLSSTPP.

Belongs to the protein kinase superfamily. TKL Ser/Thr protein kinase family. ROCO subfamily.

It catalyses the reaction L-seryl-[protein] + ATP = O-phospho-L-seryl-[protein] + ADP + H(+). It carries out the reaction L-threonyl-[protein] + ATP = O-phospho-L-threonyl-[protein] + ADP + H(+). Its function is as follows. May act as a serine/threonine-protein kinase and guanine-nucleotide releasing factor. Essential regulator of cytokinesis involved in the binding to actomyosin cytoskeleton. The chain is Probable serine/threonine-protein kinase pats1 (pats1) from Dictyostelium discoideum (Social amoeba).